We begin with the raw amino-acid sequence, 107 residues long: LYAMSPMAARYSAGAPWLYLLADMPRDSQRLVDPADLHEGRARPKRKMPSLSINNPMEVLRQRLILEVARKQMREANQRQAVANRLFLQNVGKRGFWANSAPTRYDN.

Positions 1-44 are excised as a propeptide; sequence LYAMSPMAARYSAGAPWLYLLADMPRDSQRLVDPADLHEGRARP. Valine 91 bears the Valine amide mark.

In terms of tissue distribution, expressed in corpora cardiaca (CC), corpora allata (CA), antennal lobe (AL) and gnathal ganglion (GNG) (at protein level). Expression in AL and GNG detected in some animals, in CC and CA in few animals (at protein level).

It localises to the secreted. Functionally, regulation of fluid secretion. This chain is Diuretic hormone 45, found in Agrotis ipsilon (Black cutworm moth).